The following is a 324-amino-acid chain: tRNA N6-adenosine threonylcarbamoyltransferase (324 aa).

Residues His-107, His-111, and Tyr-127 each coordinate Fe cation. Substrate contacts are provided by residues 127–131 (YVSGG), Asp-159, Gly-172, Glu-176, and Asn-257. Residue Asp-285 participates in Fe cation binding.

Belongs to the KAE1 / TsaD family. Monomer. Component of the KEOPS complex that consists of Kae1, Bud32, Cgi121 and Pcc1; the whole complex dimerizes. Requires Fe(2+) as cofactor.

It localises to the cytoplasm. It catalyses the reaction L-threonylcarbamoyladenylate + adenosine(37) in tRNA = N(6)-L-threonylcarbamoyladenosine(37) in tRNA + AMP + H(+). Functionally, required for the formation of a threonylcarbamoyl group on adenosine at position 37 (t(6)A37) in tRNAs that read codons beginning with adenine. Is a component of the KEOPS complex that is probably involved in the transfer of the threonylcarbamoyl moiety of threonylcarbamoyl-AMP (TC-AMP) to the N6 group of A37. Kae1 likely plays a direct catalytic role in this reaction, but requires other protein(s) of the complex to fulfill this activity. In Thermococcus sibiricus (strain DSM 12597 / MM 739), this protein is tRNA N6-adenosine threonylcarbamoyltransferase.